The following is a 341-amino-acid chain: GTPase Obg (341 aa).

The 159-residue stretch at 1–159 folds into the Obg domain; the sequence is MKFVDEALIK…RNLRLELRVL (159 aa). Residues 128-150 form a disordered region; that stretch reads TRYKSSVNRSPRQTTPGSPGESR. Residues 129 to 144 show a composition bias toward polar residues; the sequence is RYKSSVNRSPRQTTPG. An OBG-type G domain is found at 160-334; that stretch reads ADVGLLGLPN…LCYALMQLID (175 aa). GTP contacts are provided by residues 166-173, 191-195, 213-216, 283-286, and 315-317; these read GLPNAGKS, FTTLH, DIPG, NKID, and SAI. The Mg(2+) site is built by Ser-173 and Thr-193.

Belongs to the TRAFAC class OBG-HflX-like GTPase superfamily. OBG GTPase family. In terms of assembly, monomer. Mg(2+) serves as cofactor.

It is found in the cytoplasm. Functionally, an essential GTPase which binds GTP, GDP and possibly (p)ppGpp with moderate affinity, with high nucleotide exchange rates and a fairly low GTP hydrolysis rate. Plays a role in control of the cell cycle, stress response, ribosome biogenesis and in those bacteria that undergo differentiation, in morphogenesis control. This is GTPase Obg from Legionella pneumophila (strain Lens).